The sequence spans 318 residues: 5'-3' exonuclease (318 aa).

Residues 194–278 (AYAELALLRG…ATDAPVTLST (85 aa)) enclose the 5'-3' exonuclease domain.

Its function is as follows. 5'-3' exonuclease acting preferentially on double-stranded DNA. The chain is 5'-3' exonuclease from Mycobacterium tuberculosis (strain ATCC 25618 / H37Rv).